The following is a 281-amino-acid chain: N-methyltransferase tcpN (281 aa).

The protein belongs to the methyltransferase superfamily. LaeA methyltransferase family.

It functions in the pathway secondary metabolite biosynthesis. In terms of biological role, N-methyltransferase; part of the gene cluster that mediates the biosynthesis of an unusual class of epipolythiodioxopiperazines (ETPs) lacking the reactive thiol group important for toxicity. Firstly, L-tyrosine is prenylated by tcpD, before undergoing condensation with L-glycine in a reaction catalyzed by the NRPS tcpP leading to the diketopiperazine (DKP) backbone. Afterwards the alpha-carbon of tyrosine is oxidized by the cytochrome P450 tcpC to form a hydroxyl group. However, in contrast other ETP biosynthesis pathways studied so far, tcpC is not able to bishydroxylate the DKP at both alpha-carbon positions, but hydroxylates the alpha-carbon of the tyrosine part and the nitrogen of the glycine part. The next steps involve an alpha,beta-elimination reaction catalyzed by tcpI, a methylation by the methyltransferase tcpN the action of the four enzyme cascade tcpG/K/J/I. Due to a dysfunctional cytochrome P450 monooxygenase tcpC, the pathway leads to the biosynthesis of probable non-toxic metabolites lacking the reactive thiol group. This chain is N-methyltransferase tcpN, found in Claviceps purpurea (strain 20.1) (Ergot fungus).